The chain runs to 90 residues: Co-chaperonin GroES (90 aa).

The protein belongs to the GroES chaperonin family. In terms of assembly, heptamer of 7 subunits arranged in a ring. Interacts with the chaperonin GroEL.

The protein resides in the cytoplasm. Together with the chaperonin GroEL, plays an essential role in assisting protein folding. The GroEL-GroES system forms a nano-cage that allows encapsulation of the non-native substrate proteins and provides a physical environment optimized to promote and accelerate protein folding. GroES binds to the apical surface of the GroEL ring, thereby capping the opening of the GroEL channel. The chain is Co-chaperonin GroES from Bacteroides fragilis (strain ATCC 25285 / DSM 2151 / CCUG 4856 / JCM 11019 / LMG 10263 / NCTC 9343 / Onslow / VPI 2553 / EN-2).